A 137-amino-acid chain; its full sequence is Urease subunit beta (137 aa).

The interval 113–137 (NGHPNAGVKNDEGKQNANKESGDNR) is disordered.

This sequence belongs to the urease beta subunit family. Heterotrimer of UreA (gamma), UreB (beta) and UreC (alpha) subunits. Three heterotrimers associate to form the active enzyme.

The protein localises to the cytoplasm. The enzyme catalyses urea + 2 H2O + H(+) = hydrogencarbonate + 2 NH4(+). It functions in the pathway nitrogen metabolism; urea degradation; CO(2) and NH(3) from urea (urease route): step 1/1. The chain is Urease subunit beta from Staphylococcus carnosus (strain TM300).